A 76-amino-acid chain; its full sequence is Acyl carrier protein (76 aa).

Residues 1–76 (MSVEEKVKKI…DAIDYIAGKQ (76 aa)) enclose the Carrier domain. O-(pantetheine 4'-phosphoryl)serine is present on S36.

Belongs to the acyl carrier protein (ACP) family. Post-translationally, 4'-phosphopantetheine is transferred from CoA to a specific serine of apo-ACP by AcpS. This modification is essential for activity because fatty acids are bound in thioester linkage to the sulfhydryl of the prosthetic group.

It is found in the cytoplasm. Its pathway is lipid metabolism; fatty acid biosynthesis. Its function is as follows. Carrier of the growing fatty acid chain in fatty acid biosynthesis. The polypeptide is Acyl carrier protein (Oleidesulfovibrio alaskensis (strain ATCC BAA-1058 / DSM 17464 / G20) (Desulfovibrio alaskensis)).